Here is a 328-residue protein sequence, read N- to C-terminus: Integrator complex subunit 12 (328 aa).

Residues 1-45 (MAANIAAAAAAAQEVDPVLKKAIKLLHSSNPTSAAELRLLLDEAL) are sufficient for binding to IntS1 and IntS9 and for 3'-end snRNA processing. The PHD-type zinc finger occupies 128 to 185 (DLNCCVCGEMVFTATNRLIECSKCGAMYHQECHKPPITKEEAADDQEQNWQCDTCCNK). Composition is skewed to low complexity over residues 215–233 (KAKS…NSSS), 241–264 (SSST…SSSS), 274–283 (KSTAASSLSA), and 292–311 (SSGT…SKSS). The tract at residues 215–328 (KAKSSVASSR…GSSSKRRSKQ (114 aa)) is disordered.

Belongs to the Integrator subunit 12 family. In terms of assembly, belongs to the multiprotein complex Integrator, at least composed of IntS1, IntS2, IntS3, IntS4, omd/IntS5, IntS6, defl/IntS7, IntS8, IntS9, IntS10, IntS11, IntS12, asun/IntS13, IntS14 and IntS15. The core complex associates with protein phosphatase 2A subunits mts/PP2A and Pp2A-29B, to form the Integrator-PP2A (INTAC) complex. Within the complex, interacts with IntS1 and IntS9. Interaction with IntS1 is likely to be important for promoting 3'-end processing of snRNAs.

It localises to the nucleus. In terms of biological role, component of the integrator complex, a multiprotein complex that terminates RNA polymerase II (Pol II) transcription in the promoter-proximal region of genes. The integrator complex provides a quality checkpoint during transcription elongation by driving premature transcription termination of transcripts that are unfavorably configured for transcriptional elongation: the complex terminates transcription by (1) catalyzing dephosphorylation of the C-terminal domain (CTD) of Pol II subunit Polr2A/Rbp1 and Spt5, and (2) degrading the exiting nascent RNA transcript via endonuclease activity. The integrator complex is also involved in the 3'-end processing of the U7 snRNA, and also the spliceosomal snRNAs U1, U2, U4 and U5. Required for the normal expression of the Integrator complex component IntS1. In Drosophila melanogaster (Fruit fly), this protein is Integrator complex subunit 12.